The following is a 1121-amino-acid chain: Linoleate 10R-lipoxygenase (1121 aa).

The disordered stretch occupies residues 1–66 (MLRRFSSTFK…NEKKGNSVSP (66 aa)). Residues 22-36 (TASSSSAAVANTNNN) are compositionally biased toward low complexity. The span at 50-61 (SSSDDDRNEKKG) shows a compositional bias: basic and acidic residues. The active-site Proton acceptor is His253. Ca(2+) contacts are provided by Asp254, Ser269, Tyr271, Asp273, and Ser275.

It belongs to the peroxidase family.

It catalyses the reaction (9Z,12Z)-octadecadienoate + O2 = (8E,10R,12Z)-10-hydroperoxyoctadeca-8,12-dienoate. Responsible for the synthesis of various fatty acid-derived oxylipins. Oxidizes linoleic acid primarily to 10R-hydroperoxy-8,12-octadecadienoic acid (10R-HPODE) and, to a lesser extent, 8R-hydroperoxylinoleic acid (8R-HPODE). Also synthesizes 10-hydroxy-octadeca-8,12-dienoic acid (10-HODE) from linoleic acid and primarily 8R-hydroxy-octadeca-9-monoenoic acid (8-HOME, also known as psiB beta) from oleic acid. 8-HOME forms part of psi factor, a mixture of oxylipins that regulates the balance between sexual and asexual spore production. Displays epoxyalcohol synthase activity. Plays a role in the synthesis of prostaglandins which may be required for pathogenicity. This is Linoleate 10R-lipoxygenase from Aspergillus fumigatus (strain ATCC MYA-4609 / CBS 101355 / FGSC A1100 / Af293) (Neosartorya fumigata).